We begin with the raw amino-acid sequence, 1235 residues long: DNA polymerase catalytic subunit (1235 aa).

Disordered regions lie at residues 640–692 and 1098–1134; these read QGRF…TAGR and AAAPGDEPAPPAALPSPAKRPRETPSPADPPGGASKP. The span at 650-661 shows a compositional bias: basic and acidic residues; sequence APKRPAAAREDE. Over residues 662–675 the composition is skewed to acidic residues; the sequence is ERPEEEGEDEDERE. A compositionally biased stretch (basic and acidic residues) spans 676-691; the sequence is EGGGEREPEGARETAG.

It belongs to the DNA polymerase type-B family. In terms of assembly, forms a complex with the ssDNA-binding protein UL29, the DNA polymerase processivity factor, and the alkaline exonuclease. Interacts with the putative helicase-primase complex subunit UL8; this interaction may coordinate leading and lagging strand DNA synthesis at the replication fork.

The protein resides in the host nucleus. The enzyme catalyses DNA(n) + a 2'-deoxyribonucleoside 5'-triphosphate = DNA(n+1) + diphosphate. It catalyses the reaction Endonucleolytic cleavage to 5'-phosphomonoester.. Functionally, replicates viral genomic DNA. The replication complex is composed of six viral proteins: the DNA polymerase, processivity factor, primase, primase-associated factor, helicase, and ssDNA-binding protein. Additionally, the polymerase contains an intrinsic ribonuclease H (RNase H) activity that specifically degrades RNA/DNA heteroduplexes or duplex DNA substrates in the 5' to 3' direction. Therefore, it can catalyze the excision of the RNA primers that initiate the synthesis of Okazaki fragments at a replication fork during viral DNA replication. This is DNA polymerase catalytic subunit from Homo sapiens (Human).